Here is a 343-residue protein sequence, read N- to C-terminus: Heat-inducible transcription repressor HrcA (343 aa).

This sequence belongs to the HrcA family.

Its function is as follows. Negative regulator of class I heat shock genes (grpE-dnaK-dnaJ and groELS operons). Prevents heat-shock induction of these operons. The polypeptide is Heat-inducible transcription repressor HrcA (Halalkalibacterium halodurans (strain ATCC BAA-125 / DSM 18197 / FERM 7344 / JCM 9153 / C-125) (Bacillus halodurans)).